The following is a 220-amino-acid chain: Sericin-2 (220 aa).

2 stretches are compositionally biased toward low complexity: residues 1-131 (SSST…ASSS) and 141-155 (NESS…QNSA). Positions 1–220 (SSSTNNSSGS…SSSSSSWSSA (220 aa)) are disordered. The segment covering 156-165 (TRSQVINADG) has biased composition (polar residues). Residues 166 to 220 (SQSSSSSSSSASNQASATSSSSVSADGSESESSSSSSSSSSSSSESSSSSSWSSA) show a composition bias toward low complexity.

In terms of tissue distribution, produced exclusively in the middle (MSG) section of silk glands.

The protein resides in the secreted. Provides the silk fibroin thread with a sticky coating. Acts as a cement by sticking silk threads together. The chain is Sericin-2 (SER2) from Galleria mellonella (Greater wax moth).